A 790-amino-acid chain; its full sequence is Phenylalanine--tRNA ligase beta subunit (790 aa).

In terms of domain architecture, tRNA-binding spans proline 39 to cysteine 154. The B5 domain maps to phenylalanine 404–proline 483. Mg(2+)-binding residues include aspartate 457, aspartate 463, glutamate 466, and glutamate 467. An FDX-ACB domain is found at proline 694–serine 790.

Belongs to the phenylalanyl-tRNA synthetase beta subunit family. Type 1 subfamily. Tetramer of two alpha and two beta subunits. Mg(2+) serves as cofactor.

It localises to the cytoplasm. It catalyses the reaction tRNA(Phe) + L-phenylalanine + ATP = L-phenylalanyl-tRNA(Phe) + AMP + diphosphate + H(+). The sequence is that of Phenylalanine--tRNA ligase beta subunit from Chlamydia trachomatis serovar A (strain ATCC VR-571B / DSM 19440 / HAR-13).